Reading from the N-terminus, the 352-residue chain is Heat-inducible transcription repressor HrcA (352 aa).

The protein belongs to the HrcA family.

Its function is as follows. Negative regulator of class I heat shock genes (grpE-dnaK-dnaJ and groELS operons). Prevents heat-shock induction of these operons. The protein is Heat-inducible transcription repressor HrcA of Thermosynechococcus vestitus (strain NIES-2133 / IAM M-273 / BP-1).